A 601-amino-acid chain; its full sequence is Glutathione-regulated potassium-efflux system protein KefB (601 aa).

Helical transmembrane passes span A4 to A24, I29 to F49, E55 to L75, I87 to M107, F111 to A131, V152 to G172, H177 to G197, F207 to S227, L230 to L250, A262 to L282, L284 to I304, M324 to A344, and A356 to I376. Residues K400–T519 form the RCK N-terminal domain.

The protein belongs to the monovalent cation:proton antiporter 2 (CPA2) transporter (TC 2.A.37) family. KefB subfamily. Interacts with the regulatory subunit KefG.

It is found in the cell inner membrane. In terms of biological role, pore-forming subunit of a potassium efflux system that confers protection against electrophiles. Catalyzes K(+)/H(+) antiport. This chain is Glutathione-regulated potassium-efflux system protein KefB, found in Salmonella schwarzengrund (strain CVM19633).